The chain runs to 145 residues: MRKRDKRLYHLLLVGCVLGSLSLTAQADKGIIIIKRDVQVRNATIPPLIPDPSPTTVNANPSAHVLKQTNELSDGDFAGISSGAGISNLVTQQTNNLGGNLGNQNQLPNLAGGRGTGSGNGISNMVNSSVQRGLAPLQILTGGGK.

Positions 1–27 (MRKRDKRLYHLLLVGCVLGSLSLTAQA) are cleaved as a signal peptide.

Belongs to the FapA family. As to quaternary structure, monomer in solution. Interacts with FapC but not FapB in vitro.

It is found in the periplasm. Its function is as follows. An intrinsically disordered chaperone for fibril amyloid FapC that guards against fibrillation, pro within the periplasm. Upon overexpression of the endogenous six-gene locus (fapA-fapF), cells form large clumps during liquid growth, make large amounts of biofilm and produce relatively unstable amyloid fibrils. The chain is Functional amyloid chaperone FapA from Pseudomonas putida (strain ATCC 700007 / DSM 6899 / JCM 31910 / BCRC 17059 / LMG 24140 / F1).